The sequence spans 229 residues: E3 ubiquitin-protein ligase RNF114 (229 aa).

Positions 1-23 (MAAAQPESRDGAAQSAKPASETD) are disordered. The RING-type zinc finger occupies 30–69 (CPVCLEVFEKPVQVPCGHVFCSACLQECLKPKKPVCGVCR). Residues C92 and C95 each contribute to the Zn(2+) site. A C2HC RNF-type zinc finger spans residues 92–111 (CHGCRKNFILSKIRAHVTSC). Residue K103 is modified to N6-acetyllysine. Residues H107 and C111 each contribute to the Zn(2+) site. N6-acetyllysine is present on K113.

Interacts with XAF1, the interaction increases XAF1 stability and proapoptotic effects, and may regulate IFN signaling. Post-translationally, autoubiquitinated. Polyubiquitinated in the presence of E2 enzymes UBE2D1, UBE2D2 and UBE2D3, but only monoubiquitinated in the presence of UBE2E1.

It is found in the cytoplasm. Its subcellular location is the nucleus. It carries out the reaction S-ubiquitinyl-[E2 ubiquitin-conjugating enzyme]-L-cysteine + [acceptor protein]-L-lysine = [E2 ubiquitin-conjugating enzyme]-L-cysteine + N(6)-ubiquitinyl-[acceptor protein]-L-lysine.. Its pathway is protein modification; protein ubiquitination. In terms of biological role, E3 ubiquitin-protein ligase that promotes the ubiquitination of various substrates. In turn, participates in the regulation of many biological processes including cell cycle, apoptosis, osteoclastogenesis as well as innate or adaptive immunity. Acts as negative regulator of NF-kappa-B-dependent transcription by promoting the ubiquitination and stabilization of the NF-kappa-B inhibitor TNFAIP3. May promote the ubiquitination of TRAF6 as well. Also acts as a negative regulator of T-cell activation. Inhibits cellular dsRNA responses and interferon production by targeting MAVS component for proteasomal degradation. Ubiquitinates the CDK inhibitor CDKN1A leading to its degradationand probably also CDKN1B and CDKN1C. This activity stimulates cell cycle G1-to-S phase transition and suppresses cellular senescence. May play a role in spermatogenesis. This is E3 ubiquitin-protein ligase RNF114 (Rnf114) from Mus musculus (Mouse).